A 464-amino-acid chain; its full sequence is MMARRDPTSWAKRLVRAQTLQKQRRAPVGPRAPPPDEEDPRLKCKNCGAFGHTARSTRCPMKCWKAALVPATLGKKEGKENLKPWKPRVEANPGPLNKDKGEKEERPRQQDPQRKALLHMFSGKPPEKPLPNGKGSTEPSDYLRVASGPMPVHTTSKRPRVDPVLADGSATEMSGRGSVLASLSPLRKASLSSSSSLGPKERQTGAAADIPQPAVRHQGREPLLVVKPTHSSPEGGCREVPQAASKTHGLLQAARPQAQDKRPAVTSQPCPPAATHSLGLGSNLSFGPGAKRPAQAPIQACLNFPKKPRLGPFQIPESAIQGGELGALENLQPPPAATELGPSTSPQMGRRTSAQVPSVERQPPHSRPCLPTAQACTMSHHSAASHDGAQPLRVLFRRLENGRWSSSLLAAPSFHSPEKPGAFLAQSPHVSEKSEAPCVRVPPSVLYEDLQVSSSSEDSDSDLE.

Disordered stretches follow at residues 1-42 (MMAR…DPRL), 70-389 (PATL…HDGA), and 415-437 (HSPE…SEAP). Composition is skewed to basic and acidic residues over residues 74-89 (GKKE…KPRV) and 97-114 (NKDK…DPQR). Over residues 180-197 (LASLSPLRKASLSSSSSL) the composition is skewed to low complexity. Residues 341–356 (GPSTSPQMGRRTSAQV) are compositionally biased toward polar residues.

It belongs to the FAM90 family.

This Homo sapiens (Human) protein is Protein FAM90A11.